Reading from the N-terminus, the 136-residue chain is MLQPKRTKFRKMHKGRNRGLAVGTDVSFGTFGLKAVGRGRLTARQIEAARRAMTRAVKRQGKIWIRIFPDKPITEKPLEVRMGKGKGNVEYWVALIQPGKVLYEMDGVPEELAREAFKLAAAKLPIKTTFVTKTVM.

This sequence belongs to the universal ribosomal protein uL16 family. Part of the 50S ribosomal subunit.

Binds 23S rRNA and is also seen to make contacts with the A and possibly P site tRNAs. This Sodalis glossinidius (strain morsitans) protein is Large ribosomal subunit protein uL16.